A 254-amino-acid polypeptide reads, in one-letter code: Cell division protein DivIB (254 aa).

Residues 1–21 (MPNAQIPVLKKNRTKKRTSRK) are Cytoplasmic-facing. The chain crosses the membrane as a helical span at residues 22-42 (IAILLILLFIVLLAVLFFRSS). The Extracellular segment spans residues 43–254 (LSRVSEIRFD…EEGQEKDTTQ (212 aa)). The region spanning 44–112 (SRVSEIRFDG…GIIAIHIKEF (69 aa)) is the POTRA domain.

It belongs to the FtsQ/DivIB family. DivIB subfamily.

The protein resides in the cell membrane. Functionally, cell division protein that may be involved in stabilizing or promoting the assembly of the division complex. This Paenibacillus polymyxa (strain E681) protein is Cell division protein DivIB.